The chain runs to 445 residues: Glycine--tRNA ligase (445 aa).

Substrate is bound by residues R97 and E145. ATP contacts are provided by residues 177–179 (RNE), 187–192 (FRTCEF), 262–263 (EI), and 308–311 (GLTR). Residue 192-196 (FEQME) participates in substrate binding. Position 304 to 308 (304 to 308 (ETSAG)) interacts with substrate.

Belongs to the class-II aminoacyl-tRNA synthetase family. Homodimer.

The protein localises to the cytoplasm. It carries out the reaction tRNA(Gly) + glycine + ATP = glycyl-tRNA(Gly) + AMP + diphosphate. Catalyzes the attachment of glycine to tRNA(Gly). The polypeptide is Glycine--tRNA ligase (Borreliella afzelii (strain PKo) (Borrelia afzelii)).